Consider the following 408-residue polypeptide: Peptidase T (408 aa).

His78 serves as a coordination point for Zn(2+). The active site involves Asp80. Residue Asp140 participates in Zn(2+) binding. Glu174 serves as the catalytic Proton acceptor. Zn(2+) is bound by residues Glu175, Asp197, and His379.

Belongs to the peptidase M20B family. It depends on Zn(2+) as a cofactor.

Its subcellular location is the cytoplasm. It carries out the reaction Release of the N-terminal residue from a tripeptide.. Its function is as follows. Cleaves the N-terminal amino acid of tripeptides. The sequence is that of Peptidase T from Staphylococcus aureus (strain MRSA252).